A 155-amino-acid polypeptide reads, in one-letter code: Troponin C, isoform 3 (155 aa).

4 consecutive EF-hand domains span residues 11–46 (EQIA…MGQP), 47–82 (FDKK…FIVE), 87–122 (AMQK…LDDQ), and 123–155 (LTEQ…MTGE). Residues Asp60, Asp62, Ser64, Arg66, and Glu71 each contribute to the Ca(2+) site. Residues Asp136, Asp138, Ser140, Thr142, and Glu147 each coordinate Ca(2+).

The protein belongs to the troponin C family. As to expression, present in both larval and adult muscles.

The chain is Troponin C, isoform 3 (TpnC73F) from Drosophila melanogaster (Fruit fly).